We begin with the raw amino-acid sequence, 281 residues long: Bifunctional protein FolD (281 aa).

NADP(+) is bound at residue 163 to 165 (GRS).

The protein belongs to the tetrahydrofolate dehydrogenase/cyclohydrolase family. Homodimer.

The enzyme catalyses (6R)-5,10-methylene-5,6,7,8-tetrahydrofolate + NADP(+) = (6R)-5,10-methenyltetrahydrofolate + NADPH. It carries out the reaction (6R)-5,10-methenyltetrahydrofolate + H2O = (6R)-10-formyltetrahydrofolate + H(+). It participates in one-carbon metabolism; tetrahydrofolate interconversion. In terms of biological role, catalyzes the oxidation of 5,10-methylenetetrahydrofolate to 5,10-methenyltetrahydrofolate and then the hydrolysis of 5,10-methenyltetrahydrofolate to 10-formyltetrahydrofolate. In Leuconostoc mesenteroides subsp. mesenteroides (strain ATCC 8293 / DSM 20343 / BCRC 11652 / CCM 1803 / JCM 6124 / NCDO 523 / NBRC 100496 / NCIMB 8023 / NCTC 12954 / NRRL B-1118 / 37Y), this protein is Bifunctional protein FolD.